The chain runs to 462 residues: Microspherule protein 1 (462 aa).

M1 carries the post-translational modification N-acetylmethionine. The tract at residues 1–130 is disordered; the sequence is MDKDSQGLLD…KSKQPLQVTK (130 aa). S22 carries the phosphoserine modification. The segment covering 43–55 has biased composition (basic residues); that stretch reads PKRRSSSRFIKRK. Over residues 81–90 the composition is skewed to low complexity; sequence SGRCSGSEPS. Position 102 is a phosphoserine (S102). T103 carries the phosphothreonine modification. Pro residues predominate over residues 103–112; sequence TPVPPSPAPT. S108 is modified (phosphoserine). Positions 113–123 match the Nuclear localization signal motif; it reads PGLTKRVKKSK. K123 and K130 each carry N6-acetyllysine. S282 carries the phosphoserine modification. The stretch at 301-335 forms a coiled coil; that stretch reads LEHELTVADRRQKREIRQLEQELHKWQVLVDSITG. The FHA domain occupies 363 to 419; it reads ITLGRATKDNQIDVDLSLEGPAWKISRKQGVIKLKNNGDFFIANEGRRPIYIDGRPV. The UBR5-degron motif lies at 389–396; the sequence is RKQGVIKL.

In terms of assembly, component of the chromatin remodeling INO80 complex; specifically part of a complex module associated with the N-terminus of INO80. Component of some MLL1/MLL complex, at least composed of the core components KMT2A/MLL1, ASH2L, HCFC1, WDR5 and RBBP5, as well as the facultative components BACC1, CHD8, E2F6, HSP70, INO80C, KANSL1, LAS1L, MAX, MCRS1, MGA, KAT8/MOF, PELP1, PHF20, PRP31, RING2, RUVB1/TIP49A, RUVB2/TIP49B, SENP3, TAF1, TAF4, TAF6, TAF7, TAF9 and TEX10. Component of the NSL complex at least composed of MOF/KAT8, KANSL1, KANSL2, KANSL3, MCRS1, PHF20, OGT1/OGT, WDR5 and HCFC1. Interacts with NOP2. Interacts with PINX1. Interacts with TERT. Interacts with CCDC85B. Interacts with DAXX. Interacts (via N-terminus) with FMR1 (via phosphorylated form). Interacts with FXR1 and FXR2. Interacts (via C-terminus) with NDE1 (via C-terminus); phosphorylation of NDE1 inhibits the interaction. Interacts (via C-terminus) with ZNF375. Interacts (via C-terminus) with active GTP-bound RHEB (via N-terminus) under conditions of high amino acid concentration; the interaction promotes mTORC1 complex activation by RHEB. Interacts (via N-terminus) with the mTORC1 complex; the interaction ensures mTORC1 activation by RHEB. Interacts with DYNC1I1; the interaction is required for the proper distribution of centriolar satellites. Interacts with TTBK2; the interaction is required for recruitment of TTBK2 to the mother centriole. Interacts with KIF2A; the interaction occurs during mitosis and facilitates chromosome alignment. Post-translationally, ubiquitinated by UBR5 when not assembled in the INO80 complex, leading to its degradation: UBR5 recognizes and binds a degron that is not accessible when MCRS1 is part of the INO80 complex. Phosphorylated by AURKA on Ser-35 and/or Ser-36 during mitosis which is required for kinetochore fiber assembly and mitotic progression but not for spindle localization or for chromosome-induced microtuble aster formation. Also phosphorylated by AURKA on Ser-85 and/or Ser-87. Phosphorylated by TTK/MPS1 which enhances recruitment of KIF2A to the minus end of spindle microtubules and facilitates precise chromosome segregation.

Its subcellular location is the nucleus. It is found in the nucleolus. The protein localises to the cytoplasm. It localises to the cytoskeleton. The protein resides in the microtubule organizing center. Its subcellular location is the centrosome. It is found in the spindle pole. The protein localises to the chromosome. It localises to the centromere. The protein resides in the kinetochore. Its subcellular location is the lysosome. It is found in the centriolar satellite. Functionally, modulates the transcription repressor activity of DAXX by recruiting it to the nucleolus. As part of the NSL complex it may be involved in acetylation of nucleosomal histone H4 on several lysine residues. Putative regulatory component of the chromatin remodeling INO80 complex which is involved in transcriptional regulation, DNA replication and probably DNA repair. May also be an inhibitor of TERT telomerase activity. Binds to G-quadruplex structures in mRNA. Binds to RNA homomer poly(G) and poly(U). Maintains RHEB at the lysosome in its active GTP-bound form and prevents its interaction with the mTORC1 complex inhibitor TSC2, ensuring activation of the mTORC1 complex by RHEB. Stabilizes the minus ends of kinetochore fibers by protecting them from depolymerization, ensuring functional spindle assembly during mitosis. Following phosphorylation by TTK/MPS1, enhances recruitment of KIF2A to the minus ends of mitotic spindle microtubules which promotes chromosome alignment. Regulates the morphology of microtubule minus ends in mitotic spindle by maintaining them in a closed conformation characterized by the presence of an electron-dense cap. Regulates G2/M transition and spindle assembly during oocyte meiosis. Mediates histone modifications and transcriptional regulation in germinal vesicle oocytes which are required for meiotic progression. Also regulates microtubule nucleation and spindle assembly by activating aurora kinases during oocyte meiosis. Contributes to the establishment of centriolar satellites and also plays a role in primary cilium formation by recruiting TTBK2 to the mother centriole which is necessary for removal of the CP110 cap from the mother centriole, an early step in ciliogenesis. Required for epiblast development during early embryogenesis. Essential for cell viability. The protein is Microspherule protein 1 (Mcrs1) of Mus musculus (Mouse).